The chain runs to 297 residues: MIDLSTLTTERRNDETFNLDQMTVKEALVKMNNEDKKVAYAVEEVLPNIEPVISSAIEAFNKGGRLIYMGAGTSGRLGVLDAAECVPTFGVPATQVVGLIAGGDKAMTVAVEGAEDSLELGRQDLIDLNLSENDLVLGIAASGRTPYVIGALDYAKEIGAKRASLSCNLNAEISKHAEFPIEVDCGPEFLTGSTRLKSGTAQKLILNMISTISMIGIGKVYNNLMVDVKPTNEKLVERSKRIIMQATDCTYEEAEEKFNEANQDVKLAIVMLLTDCAAEEGKTKLVKANGFVKNTLN.

The SIS domain occupies alanine 56 to lysine 219. Glutamate 84 (proton donor) is an active-site residue. Glutamate 115 is a catalytic residue.

Belongs to the GCKR-like family. MurNAc-6-P etherase subfamily. Homodimer.

The catalysed reaction is N-acetyl-D-muramate 6-phosphate + H2O = N-acetyl-D-glucosamine 6-phosphate + (R)-lactate. The protein operates within amino-sugar metabolism; N-acetylmuramate degradation. Its function is as follows. Specifically catalyzes the cleavage of the D-lactyl ether substituent of MurNAc 6-phosphate, producing GlcNAc 6-phosphate and D-lactate. In Lactococcus lactis subsp. cremoris (strain SK11), this protein is N-acetylmuramic acid 6-phosphate etherase.